Reading from the N-terminus, the 89-residue chain is UPF0367 protein P9515_01381 (89 aa).

This sequence belongs to the UPF0367 family.

The polypeptide is UPF0367 protein P9515_01381 (Prochlorococcus marinus (strain MIT 9515)).